Here is a 104-residue protein sequence, read N- to C-terminus: Meiotically up-regulated gene 150 protein (104 aa).

Helical transmembrane passes span 30-50 (FFLK…KAWI), 54-74 (TISL…IPYF), and 84-104 (LLWF…SLEI).

The protein localises to the endoplasmic reticulum membrane. Has a role in meiosis. This is Meiotically up-regulated gene 150 protein (mug150) from Schizosaccharomyces pombe (strain 972 / ATCC 24843) (Fission yeast).